The following is a 508-amino-acid chain: Photosystem II CP47 reaction center protein (508 aa).

6 helical membrane-spanning segments follow: residues 21–36 (AVHI…WAGS), 101–115 (IVFS…IWHW), 140–156 (GIHL…FGAF), 203–218 (IAAG…FHLS), 237–252 (VLSS…AFVV), and 457–472 (TFAL…HGAR).

Belongs to the PsbB/PsbC family. PsbB subfamily. PSII is composed of 1 copy each of membrane proteins PsbA, PsbB, PsbC, PsbD, PsbE, PsbF, PsbH, PsbI, PsbJ, PsbK, PsbL, PsbM, PsbT, PsbX, PsbY, PsbZ, Psb30/Ycf12, at least 3 peripheral proteins of the oxygen-evolving complex and a large number of cofactors. It forms dimeric complexes. Binds multiple chlorophylls. PSII binds additional chlorophylls, carotenoids and specific lipids. is required as a cofactor.

The protein resides in the plastid. It is found in the chloroplast thylakoid membrane. Functionally, one of the components of the core complex of photosystem II (PSII). It binds chlorophyll and helps catalyze the primary light-induced photochemical processes of PSII. PSII is a light-driven water:plastoquinone oxidoreductase, using light energy to abstract electrons from H(2)O, generating O(2) and a proton gradient subsequently used for ATP formation. The sequence is that of Photosystem II CP47 reaction center protein from Brachypodium distachyon (Purple false brome).